The chain runs to 367 residues: Leu/Ile/Val-binding protein (367 aa).

The first 23 residues, 1–23 (MNMKGKALLAGCIALSLSNMAFA), serve as a signal peptide directing secretion. A disulfide bridge links C76 with C101.

Belongs to the leucine-binding protein family.

It is found in the periplasm. In terms of biological role, this protein is a component of the leucine, isoleucine, valine, (threonine) transport system, which is one of the two periplasmic binding protein-dependent transport systems of the high-affinity transport of the branched-chain amino acids. The sequence is that of Leu/Ile/Val-binding protein (livJ) from Citrobacter freundii.